We begin with the raw amino-acid sequence, 901 residues long: Probable inorganic carbon transporter subunit DabA (901 aa).

Residues C424, D426, H606, and C621 each contribute to the Zn(2+) site.

Belongs to the inorganic carbon transporter (TC 9.A.2) DabA family. In terms of assembly, forms a complex with DabB. Zn(2+) is required as a cofactor.

Its subcellular location is the cell membrane. In terms of biological role, part of an energy-coupled inorganic carbon pump. This is Probable inorganic carbon transporter subunit DabA from Staphylococcus aureus (strain Mu3 / ATCC 700698).